The sequence spans 143 residues: UPF0260 protein plu2141 (143 aa).

The protein belongs to the UPF0260 family.

This is UPF0260 protein plu2141 from Photorhabdus laumondii subsp. laumondii (strain DSM 15139 / CIP 105565 / TT01) (Photorhabdus luminescens subsp. laumondii).